The primary structure comprises 158 residues: MAFQILLNLVIAVIWVNFQNSYTAVDFLIGYVVGIFILFVLRRFLRFDFYMRRIWAIIKLISLFFKELILANIDVIKIVLSPKMNIQPGIVAVPTKLKTDWELSLLASLISLTPGTLSMDFSDDNKYIYIHAIDVPNKEKMIRDIHDTFERAILEVTK.

2 consecutive transmembrane segments (helical) span residues 22–41 (YTAV…LFVL) and 54–76 (IWAI…IDVI).

This sequence belongs to the CPA3 antiporters (TC 2.A.63) subunit E family. As to quaternary structure, forms a heterooligomeric complex that consists of seven subunits: MrpA, MrpB, MrpC, MrpD, MrpE, MrpF and MrpG.

The protein localises to the cell membrane. In terms of biological role, mnh complex is a Na(+)Li(+)/H(+) antiporter involved in Na(+) and/or Li(+) excretion and Na(+) resistance. Na(+)/H(+) antiport consumes a transmembrane electrical potential, and is thus inferred to be electrogenic. Does not transport K(+), Ca(2+) or Mg(2+). Mrp complex is a Na(+)/H(+) antiporter involved in Na(+) excretion and Na(+) resistance. This Alkalihalophilus pseudofirmus (strain ATCC BAA-2126 / JCM 17055 / OF4) (Bacillus pseudofirmus) protein is Na(+)/H(+) antiporter subunit E (mrpE).